We begin with the raw amino-acid sequence, 83 residues long: Mu-theraphotoxin-Hhn2f (83 aa).

A signal peptide spans 1–21 (MKASMFLALAGLVLLFVVGYA). Positions 22–48 (SESEEKEFPIELLSKIFAVDVFKGEER) are excised as a propeptide. Disulfide bonds link Cys-50-Cys-65, Cys-57-Cys-70, and Cys-64-Cys-77. At Leu-81 the chain carries Leucine amide.

This sequence belongs to the neurotoxin 10 (Hwtx-1) family. 15 (Hntx-3) subfamily. Monomer. Expressed by the venom gland.

It localises to the secreted. Lethal neurotoxin. Selectively blocks tetrodotoxin-sensitive voltage-gated sodium channels (Nav). Does not affect tetrodotoxin-resistant voltage-gated sodium channels or calcium channels. This chain is Mu-theraphotoxin-Hhn2f, found in Cyriopagopus hainanus (Chinese bird spider).